Here is a 163-residue protein sequence, read N- to C-terminus: NADH-quinone oxidoreductase subunit I (163 aa).

4Fe-4S ferredoxin-type domains lie at 53-83 (LRRY…IEAG) and 94-123 (VRYD…EGPN). C63, C66, C69, C73, C103, C106, C109, and C113 together coordinate [4Fe-4S] cluster.

This sequence belongs to the complex I 23 kDa subunit family. As to quaternary structure, NDH-1 is composed of 14 different subunits. Subunits NuoA, H, J, K, L, M, N constitute the membrane sector of the complex. The cofactor is [4Fe-4S] cluster.

It localises to the cell inner membrane. The catalysed reaction is a quinone + NADH + 5 H(+)(in) = a quinol + NAD(+) + 4 H(+)(out). Its function is as follows. NDH-1 shuttles electrons from NADH, via FMN and iron-sulfur (Fe-S) centers, to quinones in the respiratory chain. The immediate electron acceptor for the enzyme in this species is believed to be ubiquinone. Couples the redox reaction to proton translocation (for every two electrons transferred, four hydrogen ions are translocated across the cytoplasmic membrane), and thus conserves the redox energy in a proton gradient. The polypeptide is NADH-quinone oxidoreductase subunit I (Brucella suis (strain ATCC 23445 / NCTC 10510)).